The primary structure comprises 131 residues: Small ribosomal subunit protein uS8 (131 aa).

It belongs to the universal ribosomal protein uS8 family. As to quaternary structure, part of the 30S ribosomal subunit. Contacts proteins S5 and S12.

Functionally, one of the primary rRNA binding proteins, it binds directly to 16S rRNA central domain where it helps coordinate assembly of the platform of the 30S subunit. This Bordetella parapertussis (strain 12822 / ATCC BAA-587 / NCTC 13253) protein is Small ribosomal subunit protein uS8.